A 503-amino-acid chain; its full sequence is Maturase K (503 aa).

It belongs to the intron maturase 2 family. MatK subfamily.

The protein localises to the plastid. It localises to the chloroplast. Functionally, usually encoded in the trnK tRNA gene intron. Probably assists in splicing its own and other chloroplast group II introns. In Syzygium australe (Brush cherry), this protein is Maturase K.